Consider the following 261-residue polypeptide: Cytochrome c oxidase subunit 3 (261 aa).

The Mitochondrial matrix segment spans residues Met-1–Pro-15. Residues Trp-16–Trp-34 form a helical membrane-spanning segment. The Mitochondrial intermembrane portion of the chain corresponds to Phe-35–Met-40. Residues Ala-41 to Thr-66 form a helical membrane-spanning segment. At Phe-67–Thr-72 the chain is on the mitochondrial matrix side. A helical transmembrane segment spans residues Pro-73 to Ser-105. Topologically, residues Leu-106–Glu-128 are mitochondrial intermembrane. A helical transmembrane segment spans residues Val-129–Met-152. At Glu-153–Asn-155 the chain is on the mitochondrial matrix side. The chain crosses the membrane as a helical span at residues Arg-156–Glu-183. Residues Thr-184–Asp-190 are Mitochondrial intermembrane-facing. Residues Gly-191–Leu-223 traverse the membrane as a helical segment. The Mitochondrial matrix portion of the chain corresponds to Tyr-224–His-232. Residues Phe-233–Ile-256 form a helical membrane-spanning segment. Residues Tyr-257–Ser-261 lie on the Mitochondrial intermembrane side of the membrane.

It belongs to the cytochrome c oxidase subunit 3 family. As to quaternary structure, component of the cytochrome c oxidase (complex IV, CIV), a multisubunit enzyme composed of 14 subunits. The complex is composed of a catalytic core of 3 subunits MT-CO1, MT-CO2 and MT-CO3, encoded in the mitochondrial DNA, and 11 supernumerary subunits COX4I, COX5A, COX5B, COX6A, COX6B, COX6C, COX7A, COX7B, COX7C, COX8 and NDUFA4, which are encoded in the nuclear genome. The complex exists as a monomer or a dimer and forms supercomplexes (SCs) in the inner mitochondrial membrane with NADH-ubiquinone oxidoreductase (complex I, CI) and ubiquinol-cytochrome c oxidoreductase (cytochrome b-c1 complex, complex III, CIII), resulting in different assemblies (supercomplex SCI(1)III(2)IV(1) and megacomplex MCI(2)III(2)IV(2)).

The protein localises to the mitochondrion inner membrane. It carries out the reaction 4 Fe(II)-[cytochrome c] + O2 + 8 H(+)(in) = 4 Fe(III)-[cytochrome c] + 2 H2O + 4 H(+)(out). In terms of biological role, component of the cytochrome c oxidase, the last enzyme in the mitochondrial electron transport chain which drives oxidative phosphorylation. The respiratory chain contains 3 multisubunit complexes succinate dehydrogenase (complex II, CII), ubiquinol-cytochrome c oxidoreductase (cytochrome b-c1 complex, complex III, CIII) and cytochrome c oxidase (complex IV, CIV), that cooperate to transfer electrons derived from NADH and succinate to molecular oxygen, creating an electrochemical gradient over the inner membrane that drives transmembrane transport and the ATP synthase. Cytochrome c oxidase is the component of the respiratory chain that catalyzes the reduction of oxygen to water. Electrons originating from reduced cytochrome c in the intermembrane space (IMS) are transferred via the dinuclear copper A center (CU(A)) of subunit 2 and heme A of subunit 1 to the active site in subunit 1, a binuclear center (BNC) formed by heme A3 and copper B (CU(B)). The BNC reduces molecular oxygen to 2 water molecules using 4 electrons from cytochrome c in the IMS and 4 protons from the mitochondrial matrix. The chain is Cytochrome c oxidase subunit 3 (MT-CO3) from Canis lupus familiaris (Dog).